A 333-amino-acid chain; its full sequence is MQQYSSKYNKQAILLVNLGTPDNYDTKSIKRYLKEFLSDPRVIEANPILWKIILNLIILPIRAKKNIHTYKTVWNKQHNKSPLLFYTENLADKLDKKLDNYIVDYAMRYGNPSIESKIKSLQDQGATEIIIFPLYPQYSATTTATVYDEVYRVLSKLRWQPTIKGINPYYDNKFHIQTISQQIKEHLKKLDSTPDTVLFSFHGLPKEYFDKGDPYYCHCYKTYRLVKEELQNEYPNIDFELSFQSRFGPKKWLEPYTTVKLEEFAKQNKSVVIIAPGFSADCLETLEELAISEKENFIKKGGKEFSLIPCLNDSNQHVDMLYNIIDEEICLKK.

Fe cation is bound by residues H202 and E284.

Belongs to the ferrochelatase family.

It is found in the cytoplasm. It carries out the reaction heme b + 2 H(+) = protoporphyrin IX + Fe(2+). Its pathway is porphyrin-containing compound metabolism; protoheme biosynthesis; protoheme from protoporphyrin-IX: step 1/1. Catalyzes the ferrous insertion into protoporphyrin IX. This chain is Ferrochelatase, found in Francisella tularensis subsp. holarctica (strain LVS).